The following is a 437-amino-acid chain: Sodium/bile acid cotransporter 4 (437 aa).

The Extracellular portion of the chain corresponds to 1 to 103 (MDGLDNTTRL…PPFWDTPLNH (103 aa)). 3 N-linked (GlcNAc...) asparagine glycosylation sites follow: N6, N20, and N26. The disordered stretch occupies residues 16 to 84 (LLPDNLTLSP…GGVAGQDSST (69 aa)). Residues 21 to 50 (LTLSPNASSTSASTLSPLPVTSSPSPGLSL) show a composition bias toward low complexity. A helical membrane pass occupies residues 104 to 124 (GLNVFVGAALCITMLGLGCTV). Over 125-140 (DVNHFGAHVRRPVGAL) the chain is Cytoplasmic. The helical transmembrane segment at 141–161 (LAALCQFGFLPLLAFLLALAF) threads the bilayer. The Extracellular portion of the chain corresponds to 162 to 197 (KLDEVAAVAVLLCGCCPGGNLSNLMSLLVDGDMNLS). N-linked (GlcNAc...) asparagine glycosylation is found at N181 and N195. Residues 198–218 (IIMTISSTLLALVLMPLCLWI) traverse the membrane as a helical segment. Residues 219-233 (YSRAWINTPLVQLLP) lie on the Cytoplasmic side of the membrane. The helical transmembrane segment at 234–254 (LGAVTLTLCSTLIPIGLGVFI) threads the bilayer. Over 255-267 (RYKYNRVADYIVK) the chain is Extracellular. A helical transmembrane segment spans residues 268-288 (VSLCSLLVTLVVLFIMTGTML). Residues 289-291 (GPE) are Cytoplasmic-facing. Residues 292–312 (LLASIPAAVYVVAIFMPLAGY) form a helical membrane-spanning segment. The Extracellular segment spans residues 313–360 (ASGYGLATLFHLPPNCKRTVCLETGSQNVQLCTAILKLAFPPRFIGSM). A helical transmembrane segment spans residues 361 to 381 (YMFPLLYALFQSAEAGVFVLI). Residues 382–437 (YKMYGSEILHKREALDEDDDTDISYKKLKEEELADTSYGTVGTDDLVLMETTQTSL) lie on the Cytoplasmic side of the membrane.

Belongs to the bile acid:sodium symporter (BASS) (TC 2.A.28) family. In terms of processing, activated following N-terminal proteolytic cleavage by thrombin and/or proteases. In terms of tissue distribution, mainly expressed in the central nervous system cholinergic neurons. Expressed (at protein level) in motor regions of the spinal cord and rhombencephalon, in mesopontine cholinergic neurons, the medial habenula, cholinergic areas of the forebrain, and the gut myenteric plexus.

The protein localises to the cell membrane. Functionally, transporter for bile acids. In Rattus norvegicus (Rat), this protein is Sodium/bile acid cotransporter 4 (Slc10a4).